The following is a 420-amino-acid chain: WD repeat-containing protein jip5 (420 aa).

6 WD repeats span residues 9-48 (PLSA…VDSD), 72-111 (RHKG…VENK), 117-158 (DKNG…SKVS), 221-262 (VSSV…DQDE), 271-314 (GGGE…VVSE), and 318-355 (DETE…GDGV). The segment at 39 to 63 (RLPSDEVDSDDDGASTSSSRTGRGH) is disordered. The interval 350 to 420 (DSGDGVNGNE…QAVMAFHDLD (71 aa)) is disordered. The span at 368-387 (DDSDEDSDDGDDDDDSGDSD) shows a compositional bias: acidic residues. A compositionally biased stretch (basic residues) spans 394 to 406 (DARKKRKKGKTPK).

Belongs to the WD repeat WDR55 family.

Its subcellular location is the nucleus. It localises to the nucleolus. This chain is WD repeat-containing protein jip5 (jip5), found in Aspergillus terreus (strain NIH 2624 / FGSC A1156).